Consider the following 795-residue polypeptide: Lon protease (795 aa).

The region spanning 11–203 is the Lon N-terminal domain; sequence GRVIPVSDIV…KFIDYLLKQK (193 aa). 356–363 lines the ATP pocket; sequence GPPGVGKT. The region spanning 593–771 is the Lon proteolytic domain; the sequence is DNVPGVVTGL…EDVLRETLGI (179 aa). Active-site residues include serine 677 and lysine 720.

It belongs to the peptidase S16 family. As to quaternary structure, homohexamer. Organized in a ring with a central cavity.

It localises to the cytoplasm. The catalysed reaction is Hydrolysis of proteins in presence of ATP.. ATP-dependent serine protease that mediates the selective degradation of mutant and abnormal proteins as well as certain short-lived regulatory proteins. Required for cellular homeostasis and for survival from DNA damage and developmental changes induced by stress. Degrades polypeptides processively to yield small peptide fragments that are 5 to 10 amino acids long. Binds to DNA in a double-stranded, site-specific manner. This Clostridium beijerinckii (strain ATCC 51743 / NCIMB 8052) (Clostridium acetobutylicum) protein is Lon protease.